An 89-amino-acid chain; its full sequence is Small ribosomal subunit protein uS15 (89 aa).

Belongs to the universal ribosomal protein uS15 family. As to quaternary structure, part of the 30S ribosomal subunit. Forms a bridge to the 50S subunit in the 70S ribosome, contacting the 23S rRNA.

Its function is as follows. One of the primary rRNA binding proteins, it binds directly to 16S rRNA where it helps nucleate assembly of the platform of the 30S subunit by binding and bridging several RNA helices of the 16S rRNA. Forms an intersubunit bridge (bridge B4) with the 23S rRNA of the 50S subunit in the ribosome. In Paracoccus denitrificans (strain Pd 1222), this protein is Small ribosomal subunit protein uS15.